Here is a 618-residue protein sequence, read N- to C-terminus: Arginine--tRNA ligase (618 aa).

A 'HIGH' region motif is present at residues 113 to 123; that stretch reads ANPIHPLHIGH.

Belongs to the class-I aminoacyl-tRNA synthetase family.

The protein resides in the cytoplasm. The catalysed reaction is tRNA(Arg) + L-arginine + ATP = L-arginyl-tRNA(Arg) + AMP + diphosphate. This chain is Arginine--tRNA ligase, found in Sulfolobus acidocaldarius (strain ATCC 33909 / DSM 639 / JCM 8929 / NBRC 15157 / NCIMB 11770).